Consider the following 1124-residue polypeptide: PAN2-PAN3 deadenylation complex catalytic subunit PAN2 (1124 aa).

WD repeat units follow at residues 19–58 (IDNSKITSLQFDNQQNLLWCGDSKGTTRSFTPQSTSIPMP), 118–157 (PGFNNLSCMTFNSNTNNDLVIAGDSLFKVDLLKPNMTTSF), 158–195 (NHTGKVSMIDNTLNYLTLGKSNGEIEIFDPVSNQTVKS), and 309–348 (SSNTYLANLEVSGNGEFITFSDGFQNLHLWSFKNNNSKNF). The tract at residues 351–484 (FPSYLEQPDF…EYKLSNKFEV (134 aa)) is linker. The USP domain occupies 484–861 (VPNCYSNLKI…KPIIVMYQLA (378 aa)). Residues 917–1091 (IAIDAEFVAL…EDANTALLLY (175 aa)) form the Exonuclease domain. The a divalent metal cation site is built by Asp-920, Glu-922, Asp-1030, and Asp-1083.

The protein belongs to the peptidase C19 family. PAN2 subfamily. In terms of assembly, forms a heterotrimer with an asymmetric homodimer of the regulatory subunit PAN3 to form the poly(A)-nuclease (PAN) deadenylation complex. The cofactor is a divalent metal cation.

It is found in the cytoplasm. It carries out the reaction Exonucleolytic cleavage of poly(A) to 5'-AMP.. Positively regulated by the regulatory subunit PAN3. In terms of biological role, catalytic subunit of the poly(A)-nuclease (PAN) deadenylation complex, one of two cytoplasmic mRNA deadenylases involved in mRNA turnover. PAN specifically shortens poly(A) tails of RNA and the activity is stimulated by poly(A)-binding protein PAB1. PAN deadenylation is followed by rapid degradation of the shortened mRNA tails by the CCR4-NOT complex. Deadenylated mRNAs are then degraded by two alternative mechanisms, namely exosome-mediated 3'-5' exonucleolytic degradation, or deadenylation-dependent mRNA decaping and subsequent 5'-3' exonucleolytic degradation by XRN1. May also be involved in post-transcriptional maturation of mRNA poly(A) tails. This Debaryomyces hansenii (strain ATCC 36239 / CBS 767 / BCRC 21394 / JCM 1990 / NBRC 0083 / IGC 2968) (Yeast) protein is PAN2-PAN3 deadenylation complex catalytic subunit PAN2.